Consider the following 447-residue polypeptide: Biotin carboxylase (447 aa).

The Biotin carboxylation domain occupies 1-447 (MKFDKILIAN…STSFVQEMNK (447 aa)). ATP contacts are provided by residues lysine 117, lysine 159, 165–166 (GG), 201–204 (EKFI), and histidine 209. In terms of domain architecture, ATP-grasp spans 121 to 318 (KETMQKAGVP…LLVEQIRIAQ (198 aa)). Lysine 238 lines the hydrogencarbonate pocket. ATP contacts are provided by glutamate 276 and glutamate 289. 3 residues coordinate Mg(2+): glutamate 276, glutamate 289, and asparagine 291. Glutamate 276, glutamate 289, and asparagine 291 together coordinate Mn(2+). Hydrogencarbonate is bound by residues arginine 293, valine 296, and arginine 339. Arginine 293 is an active-site residue. Biotin is bound at residue arginine 339.

In terms of assembly, acetyl-CoA carboxylase is a heterohexamer of biotin carboxyl carrier protein, biotin carboxylase and the two subunits of carboxyl transferase in a 2:2 complex. The cofactor is Mg(2+). It depends on Mn(2+) as a cofactor.

The catalysed reaction is N(6)-biotinyl-L-lysyl-[protein] + hydrogencarbonate + ATP = N(6)-carboxybiotinyl-L-lysyl-[protein] + ADP + phosphate + H(+). The protein operates within lipid metabolism; malonyl-CoA biosynthesis; malonyl-CoA from acetyl-CoA: step 1/1. In terms of biological role, this protein is a component of the acetyl coenzyme A carboxylase complex; first, biotin carboxylase catalyzes the carboxylation of the carrier protein and then the transcarboxylase transfers the carboxyl group to form malonyl-CoA. The chain is Biotin carboxylase (accC) from Nostoc sp. (strain PCC 7120 / SAG 25.82 / UTEX 2576).